The chain runs to 243 residues: Phosphoribosylaminoimidazole-succinocarboxamide synthase (243 aa).

This sequence belongs to the SAICAR synthetase family.

It carries out the reaction 5-amino-1-(5-phospho-D-ribosyl)imidazole-4-carboxylate + L-aspartate + ATP = (2S)-2-[5-amino-1-(5-phospho-beta-D-ribosyl)imidazole-4-carboxamido]succinate + ADP + phosphate + 2 H(+). It functions in the pathway purine metabolism; IMP biosynthesis via de novo pathway; 5-amino-1-(5-phospho-D-ribosyl)imidazole-4-carboxamide from 5-amino-1-(5-phospho-D-ribosyl)imidazole-4-carboxylate: step 1/2. This chain is Phosphoribosylaminoimidazole-succinocarboxamide synthase, found in Methanobrevibacter smithii (strain ATCC 35061 / DSM 861 / OCM 144 / PS).